The following is a 256-amino-acid chain: Thiazole synthase (256 aa).

K97 acts as the Schiff-base intermediate with DXP in catalysis. Residues G158, 184 to 185 (AG), and 206 to 207 (NT) contribute to the 1-deoxy-D-xylulose 5-phosphate site.

The protein belongs to the ThiG family. In terms of assembly, homotetramer. Forms heterodimers with either ThiH or ThiS.

It is found in the cytoplasm. The enzyme catalyses [ThiS sulfur-carrier protein]-C-terminal-Gly-aminoethanethioate + 2-iminoacetate + 1-deoxy-D-xylulose 5-phosphate = [ThiS sulfur-carrier protein]-C-terminal Gly-Gly + 2-[(2R,5Z)-2-carboxy-4-methylthiazol-5(2H)-ylidene]ethyl phosphate + 2 H2O + H(+). Its pathway is cofactor biosynthesis; thiamine diphosphate biosynthesis. Functionally, catalyzes the rearrangement of 1-deoxy-D-xylulose 5-phosphate (DXP) to produce the thiazole phosphate moiety of thiamine. Sulfur is provided by the thiocarboxylate moiety of the carrier protein ThiS. In vitro, sulfur can be provided by H(2)S. In Flavobacterium psychrophilum (strain ATCC 49511 / DSM 21280 / CIP 103535 / JIP02/86), this protein is Thiazole synthase.